Here is a 204-residue protein sequence, read N- to C-terminus: Ancillary SecYEG translocon subunit (204 aa).

Residues 1-23 (MAYTIEEEQELTAIKAWWNENYK) are Cytoplasmic-facing. A helical transmembrane segment spans residues 24-44 (FIIVCFVIAFGGVFGWNYWQS). Residues 45–204 (HQIQKMHKAS…QLIQVRLNNL (160 aa)) are Periplasmic-facing.

This sequence belongs to the YfgM family. As to quaternary structure, interacts with the SecYEG translocon. Forms a complex with PpiD.

The protein resides in the cell inner membrane. Its function is as follows. May mediate protein transfer from the SecYEG translocon to the periplasmic chaperone network via its periplasmic C-terminal region. The polypeptide is Ancillary SecYEG translocon subunit (1057) (Aggregatibacter actinomycetemcomitans (Actinobacillus actinomycetemcomitans)).